The chain runs to 65 residues: Ferredoxin-like protein in vnf region (65 aa).

2 consecutive 4Fe-4S ferredoxin-type domains span residues 2–30 and 32–65; these read AMAI…FRDD and YAIE…PLDD. Cysteine 10, cysteine 13, cysteine 16, cysteine 20, cysteine 39, cysteine 42, cysteine 50, and cysteine 54 together coordinate [4Fe-4S] cluster.

[4Fe-4S] cluster is required as a cofactor.

This chain is Ferredoxin-like protein in vnf region, found in Azotobacter vinelandii.